Reading from the N-terminus, the 140-residue chain is ATP synthase epsilon chain (140 aa).

It belongs to the ATPase epsilon chain family. In terms of assembly, F-type ATPases have 2 components, CF(1) - the catalytic core - and CF(0) - the membrane proton channel. CF(1) has five subunits: alpha(3), beta(3), gamma(1), delta(1), epsilon(1). CF(0) has three main subunits: a, b and c.

The protein localises to the cell inner membrane. In terms of biological role, produces ATP from ADP in the presence of a proton gradient across the membrane. The protein is ATP synthase epsilon chain of Vibrio vulnificus (strain CMCP6).